The primary structure comprises 701 residues: Polyribonucleotide nucleotidyltransferase (701 aa).

Mg(2+) contacts are provided by Asp-487 and Asp-493. One can recognise a KH domain in the interval 554 to 613 (PTMIAMKIDTDKIRDVIGKGGATIRAICEETKASIDIEDDGSIKIFGESKEAAEAARQRV). The S1 motif domain occupies 623-691 (GKIYIGKVER…NRGRIKLSIK (69 aa)).

The protein belongs to the polyribonucleotide nucleotidyltransferase family. As to quaternary structure, component of the RNA degradosome, which is a multiprotein complex involved in RNA processing and mRNA degradation. Mg(2+) serves as cofactor.

The protein resides in the cytoplasm. The enzyme catalyses RNA(n+1) + phosphate = RNA(n) + a ribonucleoside 5'-diphosphate. Involved in mRNA degradation. Catalyzes the phosphorolysis of single-stranded polyribonucleotides processively in the 3'- to 5'-direction. This Pseudomonas syringae pv. syringae (strain B728a) protein is Polyribonucleotide nucleotidyltransferase.